Here is a 263-residue protein sequence, read N- to C-terminus: Small ribosomal subunit protein eS4 (263 aa).

In terms of domain architecture, S4 RNA-binding spans 42 to 104; that stretch reads LPLVIFLRNR…TNELFRLIYD (63 aa).

This sequence belongs to the eukaryotic ribosomal protein eS4 family.

This is Small ribosomal subunit protein eS4 (RpS4) from Bombyx mori (Silk moth).